A 210-amino-acid chain; its full sequence is Thiamine-phosphate synthase (210 aa).

4-amino-2-methyl-5-(diphosphooxymethyl)pyrimidine contacts are provided by residues Gln38–Lys42 and Asn70. Asp71 and Asp90 together coordinate Mg(2+). Ser107 is a 4-amino-2-methyl-5-(diphosphooxymethyl)pyrimidine binding site. Thr132–Thr134 is a binding site for 2-[(2R,5Z)-2-carboxy-4-methylthiazol-5(2H)-ylidene]ethyl phosphate. Lys135 contacts 4-amino-2-methyl-5-(diphosphooxymethyl)pyrimidine. Ile183–Ser184 contacts 2-[(2R,5Z)-2-carboxy-4-methylthiazol-5(2H)-ylidene]ethyl phosphate.

The protein belongs to the thiamine-phosphate synthase family. Mg(2+) serves as cofactor.

The enzyme catalyses 2-[(2R,5Z)-2-carboxy-4-methylthiazol-5(2H)-ylidene]ethyl phosphate + 4-amino-2-methyl-5-(diphosphooxymethyl)pyrimidine + 2 H(+) = thiamine phosphate + CO2 + diphosphate. The catalysed reaction is 2-(2-carboxy-4-methylthiazol-5-yl)ethyl phosphate + 4-amino-2-methyl-5-(diphosphooxymethyl)pyrimidine + 2 H(+) = thiamine phosphate + CO2 + diphosphate. It carries out the reaction 4-methyl-5-(2-phosphooxyethyl)-thiazole + 4-amino-2-methyl-5-(diphosphooxymethyl)pyrimidine + H(+) = thiamine phosphate + diphosphate. It participates in cofactor biosynthesis; thiamine diphosphate biosynthesis; thiamine phosphate from 4-amino-2-methyl-5-diphosphomethylpyrimidine and 4-methyl-5-(2-phosphoethyl)-thiazole: step 1/1. Functionally, condenses 4-methyl-5-(beta-hydroxyethyl)thiazole monophosphate (THZ-P) and 2-methyl-4-amino-5-hydroxymethyl pyrimidine pyrophosphate (HMP-PP) to form thiamine monophosphate (TMP). This chain is Thiamine-phosphate synthase, found in Archaeoglobus fulgidus (strain ATCC 49558 / DSM 4304 / JCM 9628 / NBRC 100126 / VC-16).